The primary structure comprises 101 residues: Small ribosomal subunit protein uS14 (101 aa).

The span at Met1–Glu11 shows a compositional bias: basic and acidic residues. The segment at Met1 to His20 is disordered.

This sequence belongs to the universal ribosomal protein uS14 family. In terms of assembly, part of the 30S ribosomal subunit. Contacts proteins S3 and S10.

In terms of biological role, binds 16S rRNA, required for the assembly of 30S particles and may also be responsible for determining the conformation of the 16S rRNA at the A site. This Xanthobacter autotrophicus (strain ATCC BAA-1158 / Py2) protein is Small ribosomal subunit protein uS14.